The sequence spans 781 residues: Penicillin-binding protein 1B (781 aa).

The transglycosylase stretch occupies residues 151–322; sequence FRLAPKLIAM…SLYNPWRNPQ (172 aa). E188 acts as the Proton donor; for transglycosylase activity in catalysis. The segment at 415-702 is transpeptidase; the sequence is SQLQLKMKNP…ALQIYKDYLN (288 aa). The active-site Acyl-ester intermediate; for transpeptidase activity is S466. Low complexity predominate over residues 749-768; sequence ETSSPSLTPTTETETPPQES. The disordered stretch occupies residues 749-781; that stretch reads ETSSPSLTPTTETETPPQESLWDVLDNPNPPAQ.

In the N-terminal section; belongs to the glycosyltransferase 51 family. It in the C-terminal section; belongs to the transpeptidase family.

It is found in the cell inner membrane. The enzyme catalyses [GlcNAc-(1-&gt;4)-Mur2Ac(oyl-L-Ala-gamma-D-Glu-L-Lys-D-Ala-D-Ala)](n)-di-trans,octa-cis-undecaprenyl diphosphate + beta-D-GlcNAc-(1-&gt;4)-Mur2Ac(oyl-L-Ala-gamma-D-Glu-L-Lys-D-Ala-D-Ala)-di-trans,octa-cis-undecaprenyl diphosphate = [GlcNAc-(1-&gt;4)-Mur2Ac(oyl-L-Ala-gamma-D-Glu-L-Lys-D-Ala-D-Ala)](n+1)-di-trans,octa-cis-undecaprenyl diphosphate + di-trans,octa-cis-undecaprenyl diphosphate + H(+). It catalyses the reaction Preferential cleavage: (Ac)2-L-Lys-D-Ala-|-D-Ala. Also transpeptidation of peptidyl-alanyl moieties that are N-acyl substituents of D-alanine.. The protein operates within cell wall biogenesis; peptidoglycan biosynthesis. Its function is as follows. Cell wall formation. Synthesis of cross-linked peptidoglycan from the lipid intermediates. The enzyme has a penicillin-insensitive transglycosylase N-terminal domain (formation of linear glycan strands) and a penicillin-sensitive transpeptidase C-terminal domain (cross-linking of the peptide subunits). This is Penicillin-binding protein 1B (mrcB) from Haemophilus influenzae (strain ATCC 51907 / DSM 11121 / KW20 / Rd).